A 446-amino-acid polypeptide reads, in one-letter code: Histone acetyltransferase type B subunit 2 (446 aa).

WD repeat units follow at residues aspartate 138–serine 178, glycine 189–lysine 229, leucine 231–aspartate 270, glycine 286–histidine 326, and glycine 330–threonine 370. Residues aspartate 372–aspartate 376 form an interaction with the histone H4 N-terminus region. Residues glycine 387 to glutamate 427 form a WD 6 repeat. The tract at residues glutamate 427–histidine 446 is disordered. Basic and acidic residues predominate over residues aspartate 437–histidine 446.

It belongs to the WD repeat RBAP46/RBAP48/MSI1 family. As to quaternary structure, component of the HAT-B complex composed of at least hat-1 and hat-2. The HAT-B complex binds to histone H4 tail.

Its subcellular location is the cytoplasm. The protein localises to the nucleus. Regulatory subunit of the histone acetylase B (HAT-B) complex. The complex acetylates 'Lys-12' of histone H4 which is required for telomeric silencing. In Neurospora crassa (strain ATCC 24698 / 74-OR23-1A / CBS 708.71 / DSM 1257 / FGSC 987), this protein is Histone acetyltransferase type B subunit 2 (hat-2).